The following is a 225-amino-acid chain: MTYKKLHEWDLSPEEAMKIQNVLREKILFKPFEGEPKYVAGVDLSFPKREEGLAVIVVMEYPTFKIVELVSERGKVDFPYIPGLLAFREGPLFLKAWEKLKTKPDVVVFDGQGIAHPRKLGIASHMGLFIEIPTIGVAKSRLYGTYREPENRRCSWSYLYDNEEIIGCVMRTREGSAPIFVSPGHLIDVESSIRLVKSFTLPGRRLPEPTRMAHIYTQRLKKGLF.

The Mg(2+) site is built by D43 and D110.

It belongs to the endonuclease V family. Mg(2+) is required as a cofactor.

The protein resides in the cytoplasm. The catalysed reaction is Endonucleolytic cleavage at apurinic or apyrimidinic sites to products with a 5'-phosphate.. Functionally, DNA repair enzyme involved in the repair of deaminated bases. Selectively cleaves double-stranded DNA at the second phosphodiester bond 3' to a deoxyinosine leaving behind the intact lesion on the nicked DNA. The chain is Endonuclease V from Thermotoga neapolitana (strain ATCC 49049 / DSM 4359 / NBRC 107923 / NS-E).